The sequence spans 361 residues: Feruloyl CoA ortho-hydroxylase 2 (361 aa).

Residues 211 to 312 enclose the Fe2OG dioxygenase domain; the sequence is GSTRINLNYY…RISVPIFVSP (102 aa). A 2-oxoglutarate-binding site is contributed by tyrosine 220. The Fe cation site is built by histidine 235, aspartate 237, and histidine 293. 2-oxoglutarate is bound by residues arginine 303 and serine 305.

Belongs to the iron/ascorbate-dependent oxidoreductase family. The cofactor is L-ascorbate. It depends on Fe(2+) as a cofactor. As to expression, low expression in roots.

The catalysed reaction is (E)-feruloyl-CoA + 2-oxoglutarate + O2 = (E)-6-hydroxyferuloyl-CoA + succinate + CO2. It carries out the reaction (E)-6-hydroxyferuloyl-CoA = scopoletin + CoA. 2-oxoglutarate (OG)- and Fe(II)-dependent dioxygenase (2OGD)involved in scopoletin biosynthesis. Converts feruloyl CoA into 6'-hydroxyferuloyl CoA but has no activity with ferulic acid, feruloylquinic acid, caffeic acid, caffeoyl CoA, p-coumaric acid, cinnamic acid, cinnamoyl CoA or benzoyl CoA. In Arabidopsis thaliana (Mouse-ear cress), this protein is Feruloyl CoA ortho-hydroxylase 2.